The following is a 771-amino-acid chain: MDATQITLVRESGHICAASIYTSWTQSGQLTQNGLSVLYYLLCKNSCGKYVPKFAEITVQQEDLCRYSRHGGSVSAATFASICRAASSAALDAWPLEPLGNADTWRCLHGTALATLRRVLGFKSFYSPVTFETDTNTGLLLKTIPDEHALNNDNTPSTGVLRANFPVAIDVSAVSACNAHTQGTSLAYARLTALKSNGDTQQQTPLDVEVITPKAYIRRKYKSTFSPPIEREGQTSDLFNLEERRLVLSGNRAIVVRVLLPCYFDCLTTDSTVTSSLSILATYRLWYAAAFGKPGVVRPIFAYLGPELNPKGEDRDYFCTVGFPGWTTLRTQTPAVESIRTATEMYMETDGLWPVTGIQAFHYLAPWGQHPPLPPRVQDLIGQIPQDTGHADATVNWDAGRISTVFKQPVQLQDRWMAKFDFSAFFPTIYCAMFPMHFRLGKIVLARMRRGMGCLKPALVSFFGGLRHILPSIYKAIIFIANEISLCVEQTALEQGFAICTYIKDGFWGIFTDLHTRNVCSDQARCSALNLAAACERAVTGLLRIQLGLNFTPAMEPVLRVEGVYTHAFTWCTTGSWLWNLQTNTPPDLVGVPWRSQAARDLKERLSGLLCTATKIRERIQENCIWDRVLYDIWAGQVVEAARKTYVDFFEHVFDRRYTPVYWSLQEQNSETKAIPASYLTYGHMQDKDYKPRQIIMVRNPNPHGPPTVVYWELLPSCACIPPIDCAAHLKPLIHTFVTIINHLLDAHNDFSSPSLKFTDDPLASYNFLFL.

The protein belongs to the herpesviridae HEPA family. As to quaternary structure, associates with the primase and the helicase to form the helicase-primase complex. Interacts with the origin-binding protein. Interacts with the polymerase catalytic subunit.

It is found in the host nucleus. Component of the helicase/primase complex. Unwinds the DNA at the replication forks and generates single-stranded DNA for both leading and lagging strand synthesis. The primase synthesizes short RNA primers on the lagging strand that the polymerase presumably elongates using dNTPs. The primase-associated factor has no known catalytic activity in the complex and may serve to facilitate the formation of the replisome by directly interacting with the origin-binding protein and the polymerase. In Varicella-zoster virus (strain Oka vaccine) (HHV-3), this protein is DNA helicase/primase complex-associated protein.